Reading from the N-terminus, the 606-residue chain is 1-deoxy-D-xylulose-5-phosphate synthase (606 aa).

Thiamine diphosphate contacts are provided by residues histidine 63 and 104 to 106 (GHS). Mg(2+) is bound at residue aspartate 137. Residues 138–139 (GS), asparagine 166, tyrosine 273, and glutamate 354 contribute to the thiamine diphosphate site. Asparagine 166 contributes to the Mg(2+) binding site.

It belongs to the transketolase family. DXPS subfamily. As to quaternary structure, homodimer. It depends on Mg(2+) as a cofactor. The cofactor is thiamine diphosphate.

It catalyses the reaction D-glyceraldehyde 3-phosphate + pyruvate + H(+) = 1-deoxy-D-xylulose 5-phosphate + CO2. Its pathway is metabolic intermediate biosynthesis; 1-deoxy-D-xylulose 5-phosphate biosynthesis; 1-deoxy-D-xylulose 5-phosphate from D-glyceraldehyde 3-phosphate and pyruvate: step 1/1. Functionally, catalyzes the acyloin condensation reaction between C atoms 2 and 3 of pyruvate and glyceraldehyde 3-phosphate to yield 1-deoxy-D-xylulose-5-phosphate (DXP). In Sulfurimonas denitrificans (strain ATCC 33889 / DSM 1251) (Thiomicrospira denitrificans (strain ATCC 33889 / DSM 1251)), this protein is 1-deoxy-D-xylulose-5-phosphate synthase.